Here is a 203-residue protein sequence, read N- to C-terminus: Pacifastin-like protease inhibitor cvp4 (203 aa).

The N-terminal stretch at 1–19 (MGFLACALLVVATAHAATA) is a signal peptide. Pacifastin domains follow at residues 23-59 (PETCEIGSNFKNYCNNCYCFDGVMDHALCTRESCDRN), 85-121 (DEPCTPGENFKYYCNDCQCLDGLRAHAMCTRMRCDRN), and 147-184 (DESCAPGASFKYYCNSCTCGAEGKVAEAQCTSQECDRY). Disulfide bonds link Cys-26–Cys-41, Cys-36–Cys-56, Cys-39–Cys-51, Cys-88–Cys-103, Cys-98–Cys-118, and Cys-101–Cys-113. Positions 129 to 148 (RKYPEPEKWNSEKERKKSDE) are enriched in basic and acidic residues. A disordered region spans residues 129 to 150 (RKYPEPEKWNSEKERKKSDESC). 3 disulfides stabilise this stretch: Cys-150-Cys-165, Cys-160-Cys-181, and Cys-163-Cys-176.

This sequence belongs to the protease inhibitor I19 family. As to expression, expressed by the venom gland.

It is found in the secreted. Inhibits trypsin activity and prophenoloxidase (PPO) activation, an enzyme essential for both clotting and insect innate immune responses. It does not inhibit activity of chymotrypsin and protease K, and has no effect on phenoloxidase (PO) activity. The sequence is that of Pacifastin-like protease inhibitor cvp4 from Pimpla hypochondriaca (Parasitoid wasp).